The chain runs to 320 residues: Aspartate carbamoyltransferase catalytic subunit (320 aa).

Carbamoyl phosphate contacts are provided by R70 and T71. L-aspartate is bound at residue K98. Carbamoyl phosphate is bound by residues R120, H149, and Q152. R182 and R237 together coordinate L-aspartate. G278 and P279 together coordinate carbamoyl phosphate.

This sequence belongs to the aspartate/ornithine carbamoyltransferase superfamily. ATCase family. Heterododecamer (2C3:3R2) of six catalytic PyrB chains organized as two trimers (C3), and six regulatory PyrI chains organized as three dimers (R2).

It carries out the reaction carbamoyl phosphate + L-aspartate = N-carbamoyl-L-aspartate + phosphate + H(+). The protein operates within pyrimidine metabolism; UMP biosynthesis via de novo pathway; (S)-dihydroorotate from bicarbonate: step 2/3. Its function is as follows. Catalyzes the condensation of carbamoyl phosphate and aspartate to form carbamoyl aspartate and inorganic phosphate, the committed step in the de novo pyrimidine nucleotide biosynthesis pathway. This Vesicomyosocius okutanii subsp. Calyptogena okutanii (strain HA) protein is Aspartate carbamoyltransferase catalytic subunit.